Here is a 186-residue protein sequence, read N- to C-terminus: Elongation factor P (186 aa).

The protein belongs to the elongation factor P family.

Its subcellular location is the cytoplasm. The protein operates within protein biosynthesis; polypeptide chain elongation. Its function is as follows. Involved in peptide bond synthesis. Stimulates efficient translation and peptide-bond synthesis on native or reconstituted 70S ribosomes in vitro. Probably functions indirectly by altering the affinity of the ribosome for aminoacyl-tRNA, thus increasing their reactivity as acceptors for peptidyl transferase. The chain is Elongation factor P from Prochlorococcus marinus subsp. pastoris (strain CCMP1986 / NIES-2087 / MED4).